The chain runs to 120 residues: uncharacterized protein (120 aa).

Residues 40–62 (SFLTDALLNLIYILFFSSSVFNW) traverse the membrane as a helical segment.

It localises to the membrane. This is an uncharacterized protein from Saccharomyces cerevisiae (strain ATCC 204508 / S288c) (Baker's yeast).